A 261-amino-acid chain; its full sequence is Na(+)-translocating NADH-quinone reductase subunit C (261 aa).

The helical transmembrane segment at 11-31 (LLVALVVCLVSSVFVAGAAVA) threads the bilayer. Threonine 230 carries the FMN phosphoryl threonine modification.

This sequence belongs to the NqrC family. As to quaternary structure, composed of six subunits; NqrA, NqrB, NqrC, NqrD, NqrE and NqrF. The cofactor is FMN.

The protein localises to the cell inner membrane. It catalyses the reaction a ubiquinone + n Na(+)(in) + NADH + H(+) = a ubiquinol + n Na(+)(out) + NAD(+). Its function is as follows. NQR complex catalyzes the reduction of ubiquinone-1 to ubiquinol by two successive reactions, coupled with the transport of Na(+) ions from the cytoplasm to the periplasm. NqrA to NqrE are probably involved in the second step, the conversion of ubisemiquinone to ubiquinol. The protein is Na(+)-translocating NADH-quinone reductase subunit C of Pseudomonas aeruginosa (strain ATCC 15692 / DSM 22644 / CIP 104116 / JCM 14847 / LMG 12228 / 1C / PRS 101 / PAO1).